A 297-amino-acid chain; its full sequence is MATH domain and coiled-coil domain-containing protein At2g05420 (297 aa).

One can recognise an MATH domain in the interval 7 to 139 (SKTITWVIEN…NGELTLVAKV (133 aa)). A coiled-coil region spans residues 239 to 281 (KLDWLEKKHGEIKEKKKKEEASLKRLQEMEKQIFNEAQIYKEK).

The polypeptide is MATH domain and coiled-coil domain-containing protein At2g05420 (Arabidopsis thaliana (Mouse-ear cress)).